Consider the following 79-residue polypeptide: Putative membrane protein insertion efficiency factor (79 aa).

This sequence belongs to the UPF0161 family.

It is found in the cell inner membrane. In terms of biological role, could be involved in insertion of integral membrane proteins into the membrane. This chain is Putative membrane protein insertion efficiency factor, found in Prochlorococcus marinus (strain SARG / CCMP1375 / SS120).